The primary structure comprises 364 residues: Aminomethyltransferase (364 aa).

Belongs to the GcvT family. The glycine cleavage system is composed of four proteins: P, T, L and H.

It catalyses the reaction N(6)-[(R)-S(8)-aminomethyldihydrolipoyl]-L-lysyl-[protein] + (6S)-5,6,7,8-tetrahydrofolate = N(6)-[(R)-dihydrolipoyl]-L-lysyl-[protein] + (6R)-5,10-methylene-5,6,7,8-tetrahydrofolate + NH4(+). Functionally, the glycine cleavage system catalyzes the degradation of glycine. The sequence is that of Aminomethyltransferase from Desulforamulus reducens (strain ATCC BAA-1160 / DSM 100696 / MI-1) (Desulfotomaculum reducens).